A 179-amino-acid polypeptide reads, in one-letter code: Replication restart protein DnaT (179 aa).

Residues 156-179 form a disordered region; the sequence is GGLPKRDVNTVSEPDSQIPPGFRG.

Belongs to the DnaT family. In terms of assembly, homooligomerizes. Interacts with PriB. Component of the replication restart primosome. Primosome assembly occurs via a 'hand-off' mechanism. PriA binds to replication forks, subsequently PriB then DnaT bind; DnaT then displaces ssDNA to generate the helicase loading substrate.

In terms of biological role, involved in the restart of stalled replication forks, which reloads the replicative helicase on sites other than the origin of replication. Can function in multiple replication restart pathways. Displaces ssDNA from a PriB-ssDNA complex. Probably forms a spiral filament on ssDNA. This chain is Replication restart protein DnaT, found in Escherichia coli (strain ATCC 8739 / DSM 1576 / NBRC 3972 / NCIMB 8545 / WDCM 00012 / Crooks).